The sequence spans 657 residues: Glycogen debranching enzyme (657 aa).

D336 (nucleophile) is an active-site residue. E371 (proton donor) is an active-site residue. The interval A460–K479 is disordered.

Belongs to the glycosyl hydrolase 13 family.

It carries out the reaction Hydrolysis of (1-&gt;6)-alpha-D-glucosidic linkages to branches with degrees of polymerization of three or four glucose residues in limit dextrin.. It functions in the pathway glycan degradation; glycogen degradation. In terms of biological role, removes maltotriose and maltotetraose chains that are attached by 1,6-alpha-linkage to the limit dextrin main chain, generating a debranched limit dextrin. In Shigella dysenteriae serotype 1 (strain Sd197), this protein is Glycogen debranching enzyme.